The primary structure comprises 423 residues: Hydroxymethylglutaryl-CoA synthase-like protein AKT4-1 (423 aa).

This sequence belongs to the thiolase-like superfamily. HMG-CoA synthase family.

Its pathway is mycotoxin biosynthesis. Hydroxymethylglutaryl-CoA synthase-like protein; part of the gene clusters that mediate the biosynthesis of the host-selective toxins (HSTs) AK-toxins responsible for Japanese pear black spot disease by the Japanese pear pathotype. AK-toxins are esters of 9,10-epoxy 8-hydroxy 9-methyldecatrienoic acid (EDA). On cellular level, AK-toxins affect plasma membrane of susceptible cells and cause a sudden increase in loss of K(+) after a few minutes of toxin treatment. The acyl-CoA ligase AKT1, the hydrolase AKT2 and enoyl-CoA hydratase AKT3 are all involved in the biosynthesis of the AK-, AF- and ACT-toxin common 9,10-epoxy-8-hydroxy-9-methyl-decatrienoic acid (EDA) structural moiety. Part of the EDA biosynthesis occurs in the peroxisome since these 3 enzymes are localized in peroxisomes. The exact roles of the 3 enzymes, as well as of additional AK-toxin clusters enzymes, including AKT4, AKT6 and AKTS1, have still to be elucidated. The Cytochrome P450 monooxygenase AKT7 on the other side functions to limit production of EDA and AK-toxin, probably via the catalysis of a side reaction of EDA or its precursor. This chain is Hydroxymethylglutaryl-CoA synthase-like protein AKT4-1, found in Alternaria alternata (Alternaria rot fungus).